A 193-amino-acid polypeptide reads, in one-letter code: Lipid A acyltransferase PagP (193 aa).

An N-terminal signal peptide occupies residues 1–32 (MNGMAVVMIIRKYFLIIALLVMPWLAIPSVSA). Catalysis depends on residues histidine 65, aspartate 108, and serine 109.

The protein belongs to the lipid A palmitoyltransferase family. In terms of assembly, homodimer.

The protein resides in the cell outer membrane. It catalyses the reaction a lipid A + a 1,2-diacyl-sn-glycero-3-phosphocholine = a hepta-acyl lipid A + a 2-acyl-sn-glycero-3-phosphocholine. The catalysed reaction is a lipid IVA + a 1,2-diacyl-sn-glycero-3-phosphocholine = a lipid IVB + a 2-acyl-sn-glycero-3-phosphocholine. It carries out the reaction a lipid IIA + a 1,2-diacyl-sn-glycero-3-phosphocholine = a lipid IIB + a 2-acyl-sn-glycero-3-phosphocholine. In terms of biological role, transfers a fatty acid residue from the sn-1 position of a phospholipid to the N-linked hydroxyfatty acid chain on the proximal unit of lipid A or its precursors. This is Lipid A acyltransferase PagP from Salmonella paratyphi C (strain RKS4594).